We begin with the raw amino-acid sequence, 329 residues long: Ketol-acid reductoisomerase (NADP(+)) (329 aa).

A KARI N-terminal Rossmann domain is found at 1–181 (MKVYYEQDAN…GGTRSGVIET (181 aa)). Residues 24-27 (YGSQ), Arg-47, and 82-85 (DQYQ) each bind NADP(+). Residue His-107 is part of the active site. Residue Gly-133 participates in NADP(+) binding. The KARI C-terminal knotted domain occupies 182–327 (TFREETETDL…ARLRSMMPWL (146 aa)). Positions 190, 194, 226, and 230 each coordinate Mg(2+). Ser-251 serves as a coordination point for substrate.

It belongs to the ketol-acid reductoisomerase family. Mg(2+) is required as a cofactor.

It catalyses the reaction (2R)-2,3-dihydroxy-3-methylbutanoate + NADP(+) = (2S)-2-acetolactate + NADPH + H(+). The enzyme catalyses (2R,3R)-2,3-dihydroxy-3-methylpentanoate + NADP(+) = (S)-2-ethyl-2-hydroxy-3-oxobutanoate + NADPH + H(+). It participates in amino-acid biosynthesis; L-isoleucine biosynthesis; L-isoleucine from 2-oxobutanoate: step 2/4. The protein operates within amino-acid biosynthesis; L-valine biosynthesis; L-valine from pyruvate: step 2/4. Involved in the biosynthesis of branched-chain amino acids (BCAA). Catalyzes an alkyl-migration followed by a ketol-acid reduction of (S)-2-acetolactate (S2AL) to yield (R)-2,3-dihydroxy-isovalerate. In the isomerase reaction, S2AL is rearranged via a Mg-dependent methyl migration to produce 3-hydroxy-3-methyl-2-ketobutyrate (HMKB). In the reductase reaction, this 2-ketoacid undergoes a metal-dependent reduction by NADPH to yield (R)-2,3-dihydroxy-isovalerate. This chain is Ketol-acid reductoisomerase (NADP(+)), found in Oleidesulfovibrio alaskensis (strain ATCC BAA-1058 / DSM 17464 / G20) (Desulfovibrio alaskensis).